Here is a 342-residue protein sequence, read N- to C-terminus: Isopentenyl-diphosphate delta-isomerase (342 aa).

Substrate is bound at residue 11-12 (RK). FMN contacts are provided by residues Ser68, 69 to 71 (SMT), Ser99, and Asn127. A substrate-binding site is contributed by 99-101 (SMR). Gln162 provides a ligand contact to substrate. Glu163 contributes to the Mg(2+) binding site. FMN is bound by residues Lys194, Thr224, 274 to 276 (GLK), and 295 to 296 (AG).

It belongs to the IPP isomerase type 2 family. In terms of assembly, homooctamer. Dimer of tetramers. FMN is required as a cofactor. It depends on NADPH as a cofactor. Mg(2+) serves as cofactor.

The protein localises to the cytoplasm. It catalyses the reaction isopentenyl diphosphate = dimethylallyl diphosphate. Its function is as follows. Involved in the biosynthesis of isoprenoids. Catalyzes the 1,3-allylic rearrangement of the homoallylic substrate isopentenyl (IPP) to its allylic isomer, dimethylallyl diphosphate (DMAPP). The chain is Isopentenyl-diphosphate delta-isomerase from Rickettsia akari (strain Hartford).